The primary structure comprises 1020 residues: Phosphatidylinositol 3-kinase VPS34 (1020 aa).

Residues 49–210 (LSTKFEDPTV…NWLDKMVLPK (162 aa)) form the C2 PI3K-type domain. The 247-residue stretch at 331-577 (DKELKPTPQL…DGPIKIYMDI (247 aa)) folds into the PIK helical domain. The region spanning 666-1004 (YPEESSVFKS…LINDSVNAFL (339 aa)) is the PI3K/PI4K catalytic domain. Positions 672–678 (VFKSSLA) are G-loop. Residues 873 to 881 (GVGDRHLDN) form a catalytic loop region. The activation loop stretch occupies residues 892-913 (HADFGYILGRDPKPFPPLMKLP).

Belongs to the PI3/PI4-kinase family. Component of the autophagy-specific VPS34 PI3-kinase complex I composed of at least VPS15, VPS30, VPS34, and of the VPS34 PI3-kinase complex II composed of VPS15, VPS30, VPS34 and VPS38. Interacts with VMNA7. Autophosphorylated.

Its subcellular location is the golgi apparatus. It is found in the trans-Golgi network membrane. The protein localises to the endosome membrane. It catalyses the reaction a 1,2-diacyl-sn-glycero-3-phospho-(1D-myo-inositol) + ATP = a 1,2-diacyl-sn-glycero-3-phospho-(1D-myo-inositol-3-phosphate) + ADP + H(+). In terms of biological role, multifunctional phosphatidylinositol 3-kinase involved in acidification of vacuoles, pH-dependent cell growth, and autophagocytosis. Plays an important role in protein transport and virulence. Component of the autophagy-specific VPS34 PI3-kinase complex I essential to recruit the ATG8-phosphatidylinositol conjugate and the ATG12-ATG5 conjugate to the pre-autophagosomal structure. Also involved in endosome-to-Golgi retrograde transport as part of the VPS34 PI3-kinase complex II. This second complex is required for the endosome-to-Golgi retrieval of PEP1 and KEX2, and the recruitment of VPS5 and VPS7, two components of the retromer complex, to endosomal membranes (probably through the synthesis of a specific pool of phosphatidylinositol 3-phosphate recruiting the retromer to the endosomes). Finally, it might also be involved in ethanol tolerance and cell wall integrity. The polypeptide is Phosphatidylinositol 3-kinase VPS34 (Candida albicans (strain SC5314 / ATCC MYA-2876) (Yeast)).